Consider the following 158-residue polypeptide: Small ribosomal subunit protein uS7 (158 aa).

The protein belongs to the universal ribosomal protein uS7 family. Part of the 30S ribosomal subunit. Contacts proteins S9 and S11.

Its function is as follows. One of the primary rRNA binding proteins, it binds directly to 16S rRNA where it nucleates assembly of the head domain of the 30S subunit. Is located at the subunit interface close to the decoding center, probably blocks exit of the E-site tRNA. The chain is Small ribosomal subunit protein uS7 from Azobacteroides pseudotrichonymphae genomovar. CFP2.